The chain runs to 169 residues: Calcium-binding protein G (169 aa).

4 consecutive EF-hand domains span residues 9-44 (KIFQ…KMNG), 60-83 (VDMD…QAKK), 92-127 (AALA…QGYN), and 133-162 (DYVL…KRLA). Residues Asp105, Asp107, Asp109, Lys111, Glu116, Asp140, Asp142, Asp144, Tyr146, and Glu151 each coordinate Ca(2+).

In Dictyostelium discoideum (Social amoeba), this protein is Calcium-binding protein G (cbpG).